Here is a 609-residue protein sequence, read N- to C-terminus: Alpha-glycerophosphate oxidase (609 aa).

21 to 49 provides a ligand contact to FAD; the sequence is DVLIIGGGITGAGVAVQTAAAGMKTVLLE.

FAD serves as cofactor.

The protein localises to the cytoplasm. It carries out the reaction sn-glycerol 3-phosphate + O2 = dihydroxyacetone phosphate + H2O2. It participates in membrane lipid metabolism; glycerophospholipid metabolism. The sequence is that of Alpha-glycerophosphate oxidase (glpO) from Enterococcus casseliflavus (Enterococcus flavescens).